A 704-amino-acid chain; its full sequence is Eukaryotic translation initiation factor 2-alpha kinase 1 (704 aa).

The region spanning Phe-224–Val-667 is the Protein kinase domain. ATP-binding positions include Leu-230–Val-238 and Lys-253. Asp-491 (proton acceptor) is an active-site residue.

Belongs to the protein kinase superfamily. Ser/Thr protein kinase family. GCN2 subfamily. In terms of processing, autophosphorylated.

The catalysed reaction is L-seryl-[protein] + ATP = O-phospho-L-seryl-[protein] + ADP + H(+). It catalyses the reaction L-threonyl-[protein] + ATP = O-phospho-L-threonyl-[protein] + ADP + H(+). In terms of biological role, mediates down-regulation of protein synthesis in response to stress conditions by the phosphorylation of the alpha subunit of eIF-2 (tif211) on 'Ser-52'. Protein synthesis is inhibited at the level of initiation. Activity is inhibited in the presence of heme. The polypeptide is Eukaryotic translation initiation factor 2-alpha kinase 1 (hri1) (Schizosaccharomyces pombe (strain 972 / ATCC 24843) (Fission yeast)).